The following is a 145-amino-acid chain: LIM domain only protein 3 (145 aa).

2 consecutive LIM zinc-binding domains span residues 11-73 and 75-137; these read KGCA…LFGV and GNCA…GLMK.

The polypeptide is LIM domain only protein 3 (LMO3) (Bos taurus (Bovine)).